The sequence spans 858 residues: Translation initiation factor IF-2 (858 aa).

Positions 49–271 are disordered; sequence TTTVTHPKSQ…NKPAPVRKDK (223 aa). Over residues 80–226 the composition is skewed to low complexity; sequence NQQQSNSRHQ…RFGGSLNSNN (147 aa). A compositionally biased stretch (basic residues) spans 239–256; that stretch reads NRRRNNRNNKSRNNKNQR. The 170-residue stretch at 359–528 folds into the tr-type G domain; it reads PRAPVVTVMG…LLQSEVLELT (170 aa). The G1 stretch occupies residues 368–375; sequence GHVDHGKT. 368-375 serves as a coordination point for GTP; that stretch reads GHVDHGKT. A G2 region spans residues 393-397; it reads GITQA. A G3 region spans residues 414-417; the sequence is DTPG. GTP-binding positions include 414 to 418 and 468 to 471; these read DTPGH and NKID. The segment at 468-471 is G4; that stretch reads NKID. Residues 504–506 form a G5 region; it reads SAK.

Belongs to the TRAFAC class translation factor GTPase superfamily. Classic translation factor GTPase family. IF-2 subfamily.

The protein resides in the cytoplasm. Functionally, one of the essential components for the initiation of protein synthesis. Protects formylmethionyl-tRNA from spontaneous hydrolysis and promotes its binding to the 30S ribosomal subunits. Also involved in the hydrolysis of GTP during the formation of the 70S ribosomal complex. This Lactiplantibacillus plantarum (strain ATCC BAA-793 / NCIMB 8826 / WCFS1) (Lactobacillus plantarum) protein is Translation initiation factor IF-2.